Reading from the N-terminus, the 307-residue chain is Aspartate carbamoyltransferase catalytic subunit (307 aa).

Carbamoyl phosphate is bound by residues Arg-56 and Thr-57. Residue Lys-84 participates in L-aspartate binding. Residues Arg-106, His-136, and Gln-139 each contribute to the carbamoyl phosphate site. L-aspartate-binding residues include Arg-169 and Arg-221. Positions 262 and 263 each coordinate carbamoyl phosphate.

It belongs to the aspartate/ornithine carbamoyltransferase superfamily. ATCase family. In terms of assembly, heterododecamer (2C3:3R2) of six catalytic PyrB chains organized as two trimers (C3), and six regulatory PyrI chains organized as three dimers (R2).

The catalysed reaction is carbamoyl phosphate + L-aspartate = N-carbamoyl-L-aspartate + phosphate + H(+). The protein operates within pyrimidine metabolism; UMP biosynthesis via de novo pathway; (S)-dihydroorotate from bicarbonate: step 2/3. Functionally, catalyzes the condensation of carbamoyl phosphate and aspartate to form carbamoyl aspartate and inorganic phosphate, the committed step in the de novo pyrimidine nucleotide biosynthesis pathway. The polypeptide is Aspartate carbamoyltransferase catalytic subunit (Streptococcus pneumoniae (strain 70585)).